The chain runs to 524 residues: Methyl-CpG-binding domain-containing protein 8 (524 aa).

Low complexity predominate over residues Cys45–Ala60. Positions Cys45–Gln151 are disordered. Residues Phe75–Gln84 show a composition bias toward polar residues. Positions Arg106–Gln116 are enriched in basic and acidic residues. Residues Glu136–Glu149 are compositionally biased toward acidic residues. The region spanning Val334–Lys406 is the MBD domain.

In terms of tissue distribution, expressed in shoot meristems, roots (vasculature and tips), hypocotyls (vasculature), cotyledons (vasculature and hydathodes), young leaves, buds, flowers and stems. Detected in stomata.

It is found in the nucleus. Functionally, probable transcriptional regulator. May regulates developmental traits such as flowering time. The sequence is that of Methyl-CpG-binding domain-containing protein 8 (MBD8) from Arabidopsis thaliana (Mouse-ear cress).